The sequence spans 886 residues: Leucine--tRNA ligase (886 aa).

The 'HIGH' region signature appears at 46–56 (PYPSGKLHMGH). A 'KMSKS' region motif is present at residues 638-642 (TMSKS). Lysine 641 contributes to the ATP binding site.

This sequence belongs to the class-I aminoacyl-tRNA synthetase family.

It is found in the cytoplasm. The catalysed reaction is tRNA(Leu) + L-leucine + ATP = L-leucyl-tRNA(Leu) + AMP + diphosphate. The sequence is that of Leucine--tRNA ligase from Polaromonas sp. (strain JS666 / ATCC BAA-500).